The primary structure comprises 178 residues: Caveolin-1 (178 aa).

Ser2 is modified (N-acetylserine). Ser2 carries the post-translational modification Phosphoserine. The interval 2 to 94 (SGGKYVDSEG…WKASFTTFTV (93 aa)) is required for homooligomerization. Residues 2–104 (SGGKYVDSEG…TKYWFYRLLS (103 aa)) lie on the Cytoplasmic side of the membrane. Lys5 is subject to N6-acetyllysine; alternate. Lys5 is covalently cross-linked (Glycyl lysine isopeptide (Lys-Gly) (interchain with G-Cter in ubiquitin); alternate). Tyr6 bears the Phosphotyrosine mark. Ser9 carries the phosphoserine modification. Phosphotyrosine; by ABL1 is present on Tyr14. A Phosphotyrosine modification is found at Tyr25. Glycyl lysine isopeptide (Lys-Gly) (interchain with G-Cter in ubiquitin) cross-links involve residues Lys26, Lys30, Lys39, Lys47, and Lys57. The interval 82–94 (DGIWKASFTTFTV) is interaction with CAVIN3. An intramembrane region (helical) is located at residues 105-125 (AVFGIPMALIWGIYFAIVSFL). Over 126 to 178 (HIWVVVPYIKSFLIEIQCISRVYSIYIHTFCDPLFEAFGKVFSNIRINTQKEI) the chain is Cytoplasmic. Residues 131 to 142 (VPYIKSFLIEIQ) form an interacts with SPRY1, SPRY2, SPRY3 and SPRY4 region. Residues Cys143 and Cys156 are each lipidated (S-palmitoyl cysteine). An interacts with SPRY1, SPRY2, and SPRY4 region spans residues 149-160 (SIYIHTFCDPLF). The interacts with SPRY1, SPRY2, SPRY3 and SPRY4 stretch occupies residues 167–178 (FSNIRINTQKEI).

This sequence belongs to the caveolin family. In terms of assembly, homooligomer. Interacts (via the N-terminus) with DPP4; the interaction is direct. Forms a stable heterooligomeric complex with CAV2 that targets to lipid rafts and drives caveolae formation. Interacts with PACSIN2; this interaction induces membrane tubulation. Interacts with BMX, BTK, CTNNB1, CDH1, GLIPR2, JUP, NOSTRIN, SNAP25 and STX1A. Interacts with SLC7A9. Interacts with TGFBR1. Interacts with CAVIN3 (via leucine-zipper domain) in a cholesterol-sensitive manner. Interacts with CAVIN1. Interacts with EHD2 in a cholesterol-dependent manner. Forms a ternary complex with UBXN6 and VCP; mediates CAV1 targeting to lysosomes for degradation. Interacts with ABCG1; this interaction regulates ABCG1-mediated cholesterol efflux. Interacts with NEU3; this interaction enhances NEU3 sialidase activity within caveola. Interacts (via C-terminus) with SPRY1, SPRY2 (via C-terminus), SPRY3, and SPRY4. Post-translationally, phosphorylated at Tyr-14 by ABL1 in response to oxidative stress. Ubiquitinated. Undergo monoubiquitination and multi- and/or polyubiquitination. Monoubiquitination of N-terminal lysines promotes integration in a ternary complex with UBXN6 and VCP which promotes oligomeric CAV1 targeting to lysosomes for degradation. Ubiquitinated by ZNRF1; leading to degradation and modulation of the TLR4-mediated immune response.

Its subcellular location is the golgi apparatus membrane. The protein resides in the cell membrane. The protein localises to the membrane. It is found in the caveola. It localises to the membrane raft. May act as a scaffolding protein within caveolar membranes. Forms a stable heterooligomeric complex with CAV2 that targets to lipid rafts and drives caveolae formation. Mediates the recruitment of CAVIN proteins (CAVIN1/2/3/4) to the caveolae. Interacts directly with G-protein alpha subunits and can functionally regulate their activity. Involved in the costimulatory signal essential for T-cell receptor (TCR)-mediated T-cell activation. Its binding to DPP4 induces T-cell proliferation and NF-kappa-B activation in a T-cell receptor/CD3-dependent manner. Recruits CTNNB1 to caveolar membranes and may regulate CTNNB1-mediated signaling through the Wnt pathway. Negatively regulates TGFB1-mediated activation of SMAD2/3 by mediating the internalization of TGFBR1 from membrane rafts leading to its subsequent degradation. Binds 20(S)-hydroxycholesterol (20(S)-OHC). This chain is Caveolin-1 (CAV1), found in Rhinolophus ferrumequinum (Greater horseshoe bat).